The sequence spans 185 residues: dCTP deaminase (185 aa).

DCTP contacts are provided by residues 107 to 112 (KSTYAR), 131 to 133 (TLE), Gln152, Tyr166, and Gln176. The active-site Proton donor/acceptor is the Glu133.

It belongs to the dCTP deaminase family. In terms of assembly, homotrimer.

It catalyses the reaction dCTP + H2O + H(+) = dUTP + NH4(+). Its pathway is pyrimidine metabolism; dUMP biosynthesis; dUMP from dCTP (dUTP route): step 1/2. Functionally, catalyzes the deamination of dCTP to dUTP. This chain is dCTP deaminase, found in Anaplasma marginale (strain Florida).